A 340-amino-acid polypeptide reads, in one-letter code: Probable tRNA pseudouridine synthase B (340 aa).

Aspartate 82 (nucleophile) is an active-site residue. One can recognise a PUA domain in the interval 250–325 (LPKVWIKDSA…IAVDVEKVFM (76 aa)).

It belongs to the pseudouridine synthase TruB family. Type 2 subfamily.

The enzyme catalyses uridine(55) in tRNA = pseudouridine(55) in tRNA. In terms of biological role, could be responsible for synthesis of pseudouridine from uracil-55 in the psi GC loop of transfer RNAs. The protein is Probable tRNA pseudouridine synthase B of Pyrococcus furiosus (strain ATCC 43587 / DSM 3638 / JCM 8422 / Vc1).